Consider the following 177-residue polypeptide: Tubulin beta chain (177 aa).

The disordered stretch occupies residues 156–177; that stretch reads YQDATAEEEGEFDEEEGDEEAA. The span at 160–177 shows a compositional bias: acidic residues; sequence TAEEEGEFDEEEGDEEAA.

It belongs to the tubulin family. Dimer of alpha and beta chains. A typical microtubule is a hollow water-filled tube with an outer diameter of 25 nm and an inner diameter of 15 nM. Alpha-beta heterodimers associate head-to-tail to form protofilaments running lengthwise along the microtubule wall with the beta-tubulin subunit facing the microtubule plus end conferring a structural polarity. Microtubules usually have 13 protofilaments but different protofilament numbers can be found in some organisms and specialized cells. It depends on Mg(2+) as a cofactor.

Its subcellular location is the cytoplasm. The protein localises to the cytoskeleton. Tubulin is the major constituent of microtubules, a cylinder consisting of laterally associated linear protofilaments composed of alpha- and beta-tubulin heterodimers. Microtubules grow by the addition of GTP-tubulin dimers to the microtubule end, where a stabilizing cap forms. Below the cap, tubulin dimers are in GDP-bound state, owing to GTPase activity of alpha-tubulin. In Lytechinus pictus (Painted sea urchin), this protein is Tubulin beta chain.